Consider the following 980-residue polypeptide: Envelope glycoprotein B (980 aa).

The span at 1 to 14 (MSSGCRSVGGSTWG) shows a compositional bias: polar residues. 2 disordered regions span residues 1–20 (MSSGCRSVGGSTWGNWRGDG) and 88–118 (TTPSPPTSTPTSMSTHSHGTVDPTLLPTETP). Residues 1-86 (MSSGCRSVGG…LFGSCVVRAV (86 aa)) form the signal peptide. Residues 87-849 (PTTPSPPTST…SGIASFLNNP (763 aa)) lie on the Virion surface side of the membrane. Residues 96-118 (TPTSMSTHSHGTVDPTLLPTETP) show a composition bias toward low complexity. 5 disulfide bridges follow: Cys140/Cys647, Cys157/Cys603, Cys231/Cys296, Cys389/Cys437, and Cys668/Cys708. The N-linked (GlcNAc...) asparagine; by host glycan is linked to Asn165. An involved in fusion and/or binding to host membrane region spans residues 197–203 (VWKGYSH). N-linked (GlcNAc...) asparagine; by host glycosylation is present at Asn275. Positions 282 to 290 (GWMPWRHYT) are involved in fusion and/or binding to host membrane. N-linked (GlcNAc...) asparagine; by host glycans are attached at residues Asn380, Asn423, Asn497, Asn514, Asn515, and Asn560. Residues 505–516 (LLNPNANNNNNT) are compositionally biased toward low complexity. A disordered region spans residues 505–535 (LLNPNANNNNNTTRRRRSLLSVPEPQPTQDG). N-linked (GlcNAc...) asparagine; by host glycans are attached at residues Asn727 and Asn749. 2 hydrophobic membrane proximal region regions span residues 794-847 (IDSV…SFLN) and 823-843 (AVGTLVLGAAGAVVSTVSGIA). The helical transmembrane segment at 850-870 (FGGLAIGLLVIAGLVAAFFAY) threads the bilayer. Topologically, residues 871–980 (RYVMQIRSNP…NDTMENEKMV (110 aa)) are intravirion. The short motif at 925–928 (YMSM) is the Golgi targeting element. The Internalization motif motif lies at 965–968 (YTRL).

It belongs to the herpesviridae glycoprotein B family. In terms of assembly, homotrimer; disulfide-linked. Binds to heparan sulfate proteoglycans. Interacts with gH/gL heterodimer. In terms of processing, a proteolytic cleavage by host furin generates two subunits that remain linked by disulfide bonds.

Its subcellular location is the virion membrane. The protein resides in the host cell membrane. It is found in the host endosome membrane. The protein localises to the host Golgi apparatus membrane. Envelope glycoprotein that forms spikes at the surface of virion envelope. Essential for the initial attachment to heparan sulfate moieties of the host cell surface proteoglycans. Involved in fusion of viral and cellular membranes leading to virus entry into the host cell. Following initial binding to its host receptors, membrane fusion is mediated by the fusion machinery composed at least of gB and the heterodimer gH/gL. May be involved in the fusion between the virion envelope and the outer nuclear membrane during virion egress. The polypeptide is Envelope glycoprotein B (Equus caballus (Horse)).